We begin with the raw amino-acid sequence, 261 residues long: Segregation and condensation protein A (261 aa).

The protein belongs to the ScpA family. Component of a cohesin-like complex composed of ScpA, ScpB and the Smc homodimer, in which ScpA and ScpB bind to the head domain of Smc. The presence of the three proteins is required for the association of the complex with DNA.

The protein resides in the cytoplasm. Participates in chromosomal partition during cell division. May act via the formation of a condensin-like complex containing Smc and ScpB that pull DNA away from mid-cell into both cell halves. This is Segregation and condensation protein A from Leptospira interrogans serogroup Icterohaemorrhagiae serovar copenhageni (strain Fiocruz L1-130).